The primary structure comprises 202 residues: Flagellar transcriptional regulator FlhC (202 aa).

Residues Cys-137, Cys-140, Cys-157, and Cys-160 each coordinate Zn(2+).

The protein belongs to the FlhC family. In terms of assembly, heterohexamer composed of two FlhC and four FlhD subunits. Each FlhC binds a FlhD dimer, forming a heterotrimer, and a hexamer assembles by dimerization of two heterotrimers. Zn(2+) is required as a cofactor.

It is found in the cytoplasm. Functions in complex with FlhD as a master transcriptional regulator that regulates transcription of several flagellar and non-flagellar operons by binding to their promoter region. Activates expression of class 2 flagellar genes, including fliA, which is a flagellum-specific sigma factor that turns on the class 3 genes. Also regulates genes whose products function in a variety of physiological pathways. This chain is Flagellar transcriptional regulator FlhC, found in Variovorax paradoxus (strain S110).